Here is a 485-residue protein sequence, read N- to C-terminus: Apolipoprotein N-acyltransferase (485 aa).

6 helical membrane-spanning segments follow: residues 8–28, 49–69, 76–96, 121–141, 157–177, and 186–206; these read IAGAILPLAFAPFNWFPIAFV, GWLFGFGFFGAGASWVYVSIH, VPLAVLITVLFVFVLALFIAF, WWVVWEWLRSILFTGFPWLFL, FGIYGISLIVAFISGCIYLLV, and IMCLILIILPFIVGWVLTFIP. Positions 220–457 constitute a CN hydrolase domain; sequence VQGNIGQRLK…RLLLTGQIKP (238 aa). Glu259 serves as the catalytic Proton acceptor. Residue Lys317 is part of the active site. The active-site Nucleophile is Cys369. The chain crosses the membrane as a helical span at residues 464 to 484; sequence LMRWNYYPVVGIIIIFLLLTF.

The protein belongs to the CN hydrolase family. Apolipoprotein N-acyltransferase subfamily.

Its subcellular location is the cell inner membrane. The catalysed reaction is N-terminal S-1,2-diacyl-sn-glyceryl-L-cysteinyl-[lipoprotein] + a glycerophospholipid = N-acyl-S-1,2-diacyl-sn-glyceryl-L-cysteinyl-[lipoprotein] + a 2-acyl-sn-glycero-3-phospholipid + H(+). Its pathway is protein modification; lipoprotein biosynthesis (N-acyl transfer). Its function is as follows. Catalyzes the phospholipid dependent N-acylation of the N-terminal cysteine of apolipoprotein, the last step in lipoprotein maturation. The protein is Apolipoprotein N-acyltransferase of Coxiella burnetii (strain RSA 493 / Nine Mile phase I).